Here is a 981-residue protein sequence, read N- to C-terminus: Ubiquitin carboxyl-terminal hydrolase 15 (981 aa).

Position 2 is an N-acetylalanine (A2). The interval 2-223 (AEGGAADLDT…KNEDGTWPRG (222 aa)) is mediates interaction with SART3. Positions 7–118 (ADLDTQRSDI…GQEPIARKVV (112 aa)) constitute a DUSP domain. Positions 216–237 (EDGTWPRGPSTPKSPGASNFST) are disordered. T226 carries the phosphothreonine modification. A compositionally biased stretch (polar residues) spans 226–237 (TPKSPGASNFST). Phosphoserine is present on residues S229 and S242. Positions 289-933 (CGLSNLGNTC…AAYVLFYQRQ (645 aa)) constitute a USP domain. Catalysis depends on C298, which acts as the Nucleophile. T602 carries the phosphothreonine modification. Residues 629 to 694 (GSLHCCKDQN…GGDNDSENGL (66 aa)) are disordered. Over residues 656-673 (METDEPDDESSQDQELPS) the composition is skewed to acidic residues. H891 functions as the Proton acceptor in the catalytic mechanism. The disordered stretch occupies residues 952–981 (SAATGIPLESDEDSNDNDNDIENENCMHTN). Acidic residues predominate over residues 960–974 (ESDEDSNDNDNDIEN). S961 and S965 each carry phosphoserine.

The protein belongs to the peptidase C19 family. As to quaternary structure, a homodimer structure has been reported; however it is unclear whether the protein form a homodimer in vivo. Identified in a complex with the COP9 signalosome complex (CSN). Interacts with SMAD1, SMAD2 and SMAD3; the interaction is direct. Forms a complex with SMURF2 and SMAD7. Interacts with TGFBR1. Interacts with SART3; the interaction is direct. May interact with RNF20 and RNF40. May interact with PRKN. Interacts with INCA1. (Microbial infection) Interacts with human papillomavirus type 16 protein E6. Post-translationally, phosphorylated. Phosphorylation protects against ubiquitination and subsequent degradation by the proteasome. Ubiquitinated, leading to degradation by the proteasome. Expressed in skeletal muscle, kidney, heart, placenta, liver, thymus, lung, and ovary, with little or no expression in other tissues.

It is found in the cytoplasm. Its subcellular location is the nucleus. The protein resides in the mitochondrion. It carries out the reaction Thiol-dependent hydrolysis of ester, thioester, amide, peptide and isopeptide bonds formed by the C-terminal Gly of ubiquitin (a 76-residue protein attached to proteins as an intracellular targeting signal).. Functionally, hydrolase that removes conjugated ubiquitin from target proteins and regulates various pathways such as the TGF-beta receptor signaling, NF-kappa-B and RNF41/NRDP1-PRKN pathways. Acts as a key regulator of TGF-beta receptor signaling pathway, but the precise mechanism is still unclear: according to a report, acts by promoting deubiquitination of monoubiquitinated R-SMADs (SMAD1, SMAD2 and/or SMAD3), thereby alleviating inhibition of R-SMADs and promoting activation of TGF-beta target genes. According to another reports, regulates the TGF-beta receptor signaling pathway by mediating deubiquitination and stabilization of TGFBR1, leading to an enhanced TGF-beta signal. Able to mediate deubiquitination of monoubiquitinated substrates, 'Lys-27'-, 'Lys-48'- and 'Lys-63'-linked polyubiquitin chains. May also regulate gene expression and/or DNA repair through the deubiquitination of histone H2B. Acts as an inhibitor of mitophagy by counteracting the action of parkin (PRKN): hydrolyzes cleavage of 'Lys-48'- and 'Lys-63'-linked polyubiquitin chains attached by parkin on target proteins such as MFN2, thereby reducing parkin's ability to drive mitophagy. Acts as an associated component of COP9 signalosome complex (CSN) and regulates different pathways via this association: regulates NF-kappa-B by mediating deubiquitination of NFKBIA and deubiquitinates substrates bound to VCP. Involved in endosome organization by mediating deubiquitination of SQSTM1: ubiquitinated SQSTM1 forms a molecular bridge that restrains cognate vesicles in the perinuclear region and its deubiquitination releases target vesicles for fast transport into the cell periphery. Acts as a negative regulator of antifungal immunity by mediating 'Lys-27'-linked deubiquitination of CARD9, thereby inactivating CARD9. In terms of biological role, (Microbial infection) Protects APC and human papillomavirus type 16 protein E6 against degradation via the ubiquitin proteasome pathway. This Homo sapiens (Human) protein is Ubiquitin carboxyl-terminal hydrolase 15.